The sequence spans 705 residues: Elongation factor G 2 (705 aa).

The tr-type G domain maps to 8–290; the sequence is ELYRNIGISA…AVLDYLPSPL (283 aa). Residues 17 to 24, 88 to 92, and 142 to 145 contribute to the GTP site; these read AHIDAGKT, DTPGH, and NKMD.

This sequence belongs to the TRAFAC class translation factor GTPase superfamily. Classic translation factor GTPase family. EF-G/EF-2 subfamily.

It is found in the cytoplasm. In terms of biological role, catalyzes the GTP-dependent ribosomal translocation step during translation elongation. During this step, the ribosome changes from the pre-translocational (PRE) to the post-translocational (POST) state as the newly formed A-site-bound peptidyl-tRNA and P-site-bound deacylated tRNA move to the P and E sites, respectively. Catalyzes the coordinated movement of the two tRNA molecules, the mRNA and conformational changes in the ribosome. In Bordetella avium (strain 197N), this protein is Elongation factor G 2.